We begin with the raw amino-acid sequence, 106 residues long: Glycine/glutamate-rich protein sgp1 (106 aa).

Residues 1 to 20 form the signal peptide; the sequence is MKYSLIFILTLACLIASSLA. Residues 20–66 form a disordered region; the sequence is ARPEGEEKPADDAAGDKKEEGAEGDKTAAGGDEGFTGGDGKNAGGAG. Over residues 22–45 the composition is skewed to basic and acidic residues; it reads PEGEEKPADDAAGDKKEEGAEGDK. Positions 50–66 are enriched in gly residues; it reads GDEGFTGGDGKNAGGAG.

The protein localises to the secreted. This Glossina morsitans morsitans (Savannah tsetse fly) protein is Glycine/glutamate-rich protein sgp1 (sgp1).